The sequence spans 169 residues: Proepiregulin (169 aa).

An N-terminal signal peptide occupies residues 1–29; it reads MTAGRRMEMLCAGRVPALLLCLGFHLLQA. The propeptide occupies 30-62; sequence VLSTTVIPSCIPGESSDNCTALVQTEDNPRVAQ. Asparagine 47 carries N-linked (GlcNAc...) asparagine glycosylation. At 60-119 the chain is on the extracellular side; that stretch reads VAQVSITKCSSDMNGYCLHGQCIYLVDMSQNYCRCEVGYTGVRCEHFFLTVHQPLSKEYV. The 41-residue stretch at 64–104 folds into the EGF-like domain; it reads SITKCSSDMNGYCLHGQCIYLVDMSQNYCRCEVGYTGVRCE. 3 disulfide bridges follow: cysteine 68/cysteine 81, cysteine 76/cysteine 92, and cysteine 94/cysteine 103. The propeptide at 109 to 169 is removed in mature form; that stretch reads TVHQPLSKEY…TSGDPELPQV (61 aa). The helical transmembrane segment at 120 to 140 threads the bilayer; sequence ALTVILIILFLITVVGSTYYF. The Cytoplasmic segment spans residues 141–169; the sequence is CRWYRNRKSKEPKKEYERVTSGDPELPQV.

Interacts with EGFR and ERBB4. As to expression, in normal adults, expressed predominantly in the placenta and peripheral blood leukocytes. High levels were detected in carcinomas of the bladder, lung, kidney and colon.

The protein localises to the secreted. It localises to the extracellular space. Its subcellular location is the cell membrane. Ligand of the EGF receptor/EGFR and ERBB4. Stimulates EGFR and ERBB4 tyrosine phosphorylation. Contributes to inflammation, wound healing, tissue repair, and oocyte maturation by regulating angiogenesis and vascular remodeling and by stimulating cell proliferation. This chain is Proepiregulin (EREG), found in Homo sapiens (Human).